The sequence spans 379 residues: Protein COS2 (379 aa).

The Cytoplasmic segment spans residues 1–72; it reads MKENELKNEK…WKLSNNCIYP (72 aa). Residues 73–93 traverse the membrane as a helical segment; the sequence is LIVSLLVLFLGPIFVLVICGL. Over 94 to 254 the chain is Extracellular; sequence SRKRSLSKQL…FLCCIYVSRG (161 aa). Residues 255-275 form a helical membrane-spanning segment; the sequence is MCLLLRTLYLGWILFMLVQGF. Residues 276-379 lie on the Cytoplasmic side of the membrane; sequence QNIRVLIMSM…QLSRSEVLLV (104 aa).

This sequence belongs to the DUP/COS family.

Its subcellular location is the membrane. This Saccharomyces cerevisiae (strain ATCC 204508 / S288c) (Baker's yeast) protein is Protein COS2 (COS2).